Consider the following 438-residue polypeptide: PHAF1 protein CG7083 (438 aa).

Belongs to the PHAF1 family.

The protein resides in the cytoplasm. It is found in the preautophagosomal structure. May play a regulatory role in autophagic activity. In Drosophila melanogaster (Fruit fly), this protein is PHAF1 protein CG7083.